A 380-amino-acid chain; its full sequence is Chaperone protein DnaJ (380 aa).

In terms of domain architecture, J spans 4 to 68; the sequence is DFYSVLGVSR…EKRRMYDQMG (65 aa). The segment covering 27–87 has biased composition (basic and acidic residues); the sequence is KASEYHPDVS…RGATDTDRGR (61 aa). The tract at residues 27–126 is disordered; the sequence is KASEYHPDVS…SRSGPRQGSD (100 aa). Gly residues predominate over residues 88-100; it reads GGMGGMGGGGMGG. Over residues 115–124 the composition is skewed to low complexity; sequence SQSRSGPRQG. Residues 141 to 223 form a CR-type zinc finger; it reads GVTKQLTVTR…CRGDGQVRNE (83 aa). The Zn(2+) site is built by cysteine 154, cysteine 157, cysteine 171, cysteine 174, cysteine 197, cysteine 200, cysteine 211, and cysteine 214. CXXCXGXG motif repeat units follow at residues 154–161, 171–178, 197–204, and 211–218; these read CPDCDGAG, CSACDGRG, CPQCDGKG, and CSTCRGDG.

The protein belongs to the DnaJ family. In terms of assembly, homodimer. Requires Zn(2+) as cofactor.

The protein resides in the cytoplasm. Participates actively in the response to hyperosmotic and heat shock by preventing the aggregation of stress-denatured proteins and by disaggregating proteins, also in an autonomous, DnaK-independent fashion. Unfolded proteins bind initially to DnaJ; upon interaction with the DnaJ-bound protein, DnaK hydrolyzes its bound ATP, resulting in the formation of a stable complex. GrpE releases ADP from DnaK; ATP binding to DnaK triggers the release of the substrate protein, thus completing the reaction cycle. Several rounds of ATP-dependent interactions between DnaJ, DnaK and GrpE are required for fully efficient folding. Also involved, together with DnaK and GrpE, in the DNA replication of plasmids through activation of initiation proteins. The sequence is that of Chaperone protein DnaJ from Natronomonas pharaonis (strain ATCC 35678 / DSM 2160 / CIP 103997 / JCM 8858 / NBRC 14720 / NCIMB 2260 / Gabara) (Halobacterium pharaonis).